Reading from the N-terminus, the 588-residue chain is DNA mismatch repair protein MutL (588 aa).

It belongs to the DNA mismatch repair MutL/HexB family.

This protein is involved in the repair of mismatches in DNA. It is required for dam-dependent methyl-directed DNA mismatch repair. May act as a 'molecular matchmaker', a protein that promotes the formation of a stable complex between two or more DNA-binding proteins in an ATP-dependent manner without itself being part of a final effector complex. The chain is DNA mismatch repair protein MutL from Fervidobacterium nodosum (strain ATCC 35602 / DSM 5306 / Rt17-B1).